The following is a 261-amino-acid chain: Ice-binding protein (261 aa).

Residues 1 to 20 form the signal peptide; it reads MSLLSIITIGLAGLGGLVNG. An N-linked (GlcNAc...) asparagine glycan is attached at N185.

This sequence belongs to the ice-binding protein family. As to quaternary structure, homodimer. Dimerization is not required for the thermal hysteresis (TH) activity. Post-translationally, glycosylated. Glycosylation is not required for the thermal hysteresis (TH) activity. Glycosylation may increase stability and secretion of this protein.

It is found in the secreted. In terms of biological role, confers freeze tolerance. Binds to the surface of ice crystals and inhibits their growth. Has low thermal hysteresis (TH) activity, which is the ability to lower the freezing point of an aqueous solution below its melting point. The TH activity of this protein is approximately 0.2 degrees Celsius at 50 uM and 0.3 degrees Celsius at 400 uM. This chain is Ice-binding protein, found in Leucosporidium sp. (strain AY30) (Arctic yeast).